Here is a 306-residue protein sequence, read N- to C-terminus: MNWITNYVRPKINSILRRREIPDNLWIKDPTSGEMVFHKDLEVNQYVIPNSGYHMRISAKNRLMHFFDDGIYTPLENPKVVIDPLKFRDEKRYIDRLKDYRSKLGVDDNILSAQGTIEGLPIVATVQDFAFMGGSLGMASGEAIIKAFDTAIANKCPLVLFSASGGARMQEGTLSLMQMPRTTVAIEMMKEAKLPYIVVLTNPTTGGVTASYAMLGDIHIAEPGAMIGFAGPRVIQQTIRETLPEGFQSSEYLLEHGMIDMVVSRLEMKATIARLLRLIMKCPPAVNPSNPSPTDSQPPLSKAEAA.

Positions 25–294 constitute a CoA carboxyltransferase N-terminal domain; the sequence is LWIKDPTSGE…AVNPSNPSPT (270 aa). The tract at residues 286-306 is disordered; sequence VNPSNPSPTDSQPPLSKAEAA. Residues 287-299 are compositionally biased toward polar residues; the sequence is NPSNPSPTDSQPP.

This sequence belongs to the AccD/PCCB family. Acetyl-CoA carboxylase is a heterohexamer composed of biotin carboxyl carrier protein (AccB), biotin carboxylase (AccC) and two subunits each of ACCase subunit alpha (AccA) and ACCase subunit beta (AccD).

The protein resides in the cytoplasm. It carries out the reaction N(6)-carboxybiotinyl-L-lysyl-[protein] + acetyl-CoA = N(6)-biotinyl-L-lysyl-[protein] + malonyl-CoA. It functions in the pathway lipid metabolism; malonyl-CoA biosynthesis; malonyl-CoA from acetyl-CoA: step 1/1. In terms of biological role, component of the acetyl coenzyme A carboxylase (ACC) complex. Biotin carboxylase (BC) catalyzes the carboxylation of biotin on its carrier protein (BCCP) and then the CO(2) group is transferred by the transcarboxylase to acetyl-CoA to form malonyl-CoA. In Bartonella quintana (strain Toulouse) (Rochalimaea quintana), this protein is Acetyl-coenzyme A carboxylase carboxyl transferase subunit beta.